Here is a 379-residue protein sequence, read N- to C-terminus: Homoserine O-acetyltransferase (379 aa).

Positions 54 to 332 (NAILVCHALS…PYQSEEIVKS (279 aa)) constitute an AB hydrolase-1 domain. Residue serine 159 is the Nucleophile of the active site. Residue arginine 228 participates in substrate binding. Catalysis depends on residues aspartate 318 and histidine 352. Aspartate 353 serves as a coordination point for substrate.

The protein belongs to the AB hydrolase superfamily. MetX family. In terms of assembly, homodimer.

It is found in the cytoplasm. The catalysed reaction is L-homoserine + acetyl-CoA = O-acetyl-L-homoserine + CoA. It functions in the pathway amino-acid biosynthesis; L-methionine biosynthesis via de novo pathway; O-acetyl-L-homoserine from L-homoserine: step 1/1. Functionally, transfers an acetyl group from acetyl-CoA to L-homoserine, forming acetyl-L-homoserine. The sequence is that of Homoserine O-acetyltransferase from Leptospira meyeri.